We begin with the raw amino-acid sequence, 213 residues long: Thiopurine S-methyltransferase (213 aa).

S-adenosyl-L-methionine is bound by residues Trp-10, Leu-45, Glu-66, and Arg-121.

Belongs to the class I-like SAM-binding methyltransferase superfamily. TPMT family.

The protein localises to the cytoplasm. It carries out the reaction S-adenosyl-L-methionine + a thiopurine = S-adenosyl-L-homocysteine + a thiopurine S-methylether.. In Aliivibrio salmonicida (strain LFI1238) (Vibrio salmonicida (strain LFI1238)), this protein is Thiopurine S-methyltransferase.